The chain runs to 210 residues: Prolactin (210 aa).

Positions 1 to 23 (MAEGSRLYFAVTVLMCAFVSING) are cleaved as a signal peptide. 2 disulfides stabilise this stretch: C69–C183 and C200–C210.

It belongs to the somatotropin/prolactin family. Pituitary gland.

The protein resides in the secreted. In Hypophthalmichthys nobilis (Bighead carp), this protein is Prolactin (prl).